A 217-amino-acid polypeptide reads, in one-letter code: Small ribosomal subunit protein eS6 (217 aa).

Belongs to the eukaryotic ribosomal protein eS6 family.

In Hyperthermus butylicus (strain DSM 5456 / JCM 9403 / PLM1-5), this protein is Small ribosomal subunit protein eS6.